The sequence spans 557 residues: Potassium-transporting ATPase potassium-binding subunit (557 aa).

12 consecutive transmembrane segments (helical) span residues 5–25, 63–83, 132–152, 170–190, 253–273, 283–303, 329–349, 356–376, 379–399, 416–436, 484–504, and 526–546; these read GFLL…PLGS, LCAI…MLLG, GLTV…FALI, LLRI…LFFI, FVQM…FGEV, LLWA…WAEV, VLVS…AVIA, ALGG…FGGV, GLYG…LMIG, LTAL…ALAM, LLAF…MAIA, and LFVG…FIPA.

The protein belongs to the KdpA family. In terms of assembly, the system is composed of three essential subunits: KdpA, KdpB and KdpC.

It is found in the cell inner membrane. Part of the high-affinity ATP-driven potassium transport (or Kdp) system, which catalyzes the hydrolysis of ATP coupled with the electrogenic transport of potassium into the cytoplasm. This subunit binds the periplasmic potassium ions and delivers the ions to the membrane domain of KdpB through an intramembrane tunnel. This is Potassium-transporting ATPase potassium-binding subunit from Escherichia coli O17:K52:H18 (strain UMN026 / ExPEC).